Here is a 383-residue protein sequence, read N- to C-terminus: Mannitol-1-phosphate 5-dehydrogenase (383 aa).

3 to 14 (ALHFGAGNIGRG) contributes to the NAD(+) binding site.

It belongs to the mannitol dehydrogenase family.

It carries out the reaction D-mannitol 1-phosphate + NAD(+) = beta-D-fructose 6-phosphate + NADH + H(+). The protein is Mannitol-1-phosphate 5-dehydrogenase of Serratia proteamaculans (strain 568).